Reading from the N-terminus, the 90-residue chain is Accessory gland-specific peptide 26Ab (90 aa).

Positions 1-21 (MNYFAVLCIFSCICFWQFSDA) are cleaved as a signal peptide.

As to expression, main cells of the accessory glands of males.

It is found in the secreted. Its subcellular location is the extracellular space. Its function is as follows. This protein is transferred from male to female during mating and may affect egglaying and behavior after mating. The chain is Accessory gland-specific peptide 26Ab (Acp26Ab) from Drosophila simulans (Fruit fly).